Reading from the N-terminus, the 237-residue chain is 1-(5-phosphoribosyl)-5-[(5-phosphoribosylamino)methylideneamino] imidazole-4-carboxamide isomerase (237 aa).

The active-site Proton acceptor is aspartate 8. Aspartate 127 (proton donor) is an active-site residue.

This sequence belongs to the HisA/HisF family.

The protein localises to the cytoplasm. It catalyses the reaction 1-(5-phospho-beta-D-ribosyl)-5-[(5-phospho-beta-D-ribosylamino)methylideneamino]imidazole-4-carboxamide = 5-[(5-phospho-1-deoxy-D-ribulos-1-ylimino)methylamino]-1-(5-phospho-beta-D-ribosyl)imidazole-4-carboxamide. The protein operates within amino-acid biosynthesis; L-histidine biosynthesis; L-histidine from 5-phospho-alpha-D-ribose 1-diphosphate: step 4/9. The sequence is that of 1-(5-phosphoribosyl)-5-[(5-phosphoribosylamino)methylideneamino] imidazole-4-carboxamide isomerase from Sulfurovum sp. (strain NBC37-1).